The sequence spans 235 residues: Sugar fermentation stimulation protein homolog (235 aa).

Belongs to the SfsA family.

The polypeptide is Sugar fermentation stimulation protein homolog (Aliivibrio fischeri (strain ATCC 700601 / ES114) (Vibrio fischeri)).